The chain runs to 142 residues: HTH-type transcriptional regulator MntR (142 aa).

The 63-residue stretch at M1 to T63 folds into the HTH dtxR-type domain. Residues D8, E11, H77, E99, E102, and H103 each contribute to the Mn(2+) site.

This sequence belongs to the DtxR/MntR family. As to quaternary structure, homodimer.

The protein localises to the cytoplasm. DNA binding is strongly activated by Mn(2+). In terms of biological role, central regulator of manganese homeostasis. The sequence is that of HTH-type transcriptional regulator MntR from Listeria innocua serovar 6a (strain ATCC BAA-680 / CLIP 11262).